The following is a 474-amino-acid chain: Glycogen synthase (474 aa).

Lys-12 lines the ADP-alpha-D-glucose pocket.

The protein belongs to the glycosyltransferase 1 family. Bacterial/plant glycogen synthase subfamily.

It carries out the reaction [(1-&gt;4)-alpha-D-glucosyl](n) + ADP-alpha-D-glucose = [(1-&gt;4)-alpha-D-glucosyl](n+1) + ADP + H(+). It functions in the pathway glycan biosynthesis; glycogen biosynthesis. Functionally, synthesizes alpha-1,4-glucan chains using ADP-glucose. The polypeptide is Glycogen synthase (Xanthomonas campestris pv. campestris (strain 8004)).